A 203-amino-acid polypeptide reads, in one-letter code: Adenosylcobalamin/alpha-ribazole phosphatase (203 aa).

His8 serves as the catalytic Tele-phosphohistidine intermediate. Glu81 serves as the catalytic Proton donor/acceptor.

It belongs to the phosphoglycerate mutase family.

It carries out the reaction adenosylcob(III)alamin 5'-phosphate + H2O = adenosylcob(III)alamin + phosphate. The enzyme catalyses alpha-ribazole 5'-phosphate + H2O = alpha-ribazole + phosphate. Its pathway is nucleoside biosynthesis; alpha-ribazole biosynthesis; alpha-ribazole from 5,6-dimethylbenzimidazole: step 2/2. In terms of biological role, catalyzes the conversion of adenosylcobalamin 5'-phosphate to adenosylcobalamin (vitamin B12); involved in the assembly of the nucleotide loop of cobalamin. Also catalyzes the hydrolysis of the phospho group from alpha-ribazole 5'-phosphate to form alpha-ribazole. In Escherichia coli (strain K12), this protein is Adenosylcobalamin/alpha-ribazole phosphatase (cobC).